We begin with the raw amino-acid sequence, 86 residues long: Large ribosomal subunit protein uL23 (86 aa).

This sequence belongs to the universal ribosomal protein uL23 family. As to quaternary structure, part of the 50S ribosomal subunit. Contacts protein L29.

Binds to 23S rRNA. One of the proteins that surrounds the polypeptide exit tunnel on the outside of the ribosome. The protein is Large ribosomal subunit protein uL23 of Caldivirga maquilingensis (strain ATCC 700844 / DSM 13496 / JCM 10307 / IC-167).